The sequence spans 301 residues: uncharacterized protein (301 aa).

The protein belongs to the asfivirus E301R family. As to quaternary structure, interacts with host IRF3.

Its function is as follows. Plays a role in the inhibition of host innate immune system by acting as a negatively regulator of type I interferon production. Mechanistically, interacts with and prevents host IRF3 nuclear localization to inhibit its transcriptional activity. This is an uncharacterized protein from African swine fever virus (isolate Pig/Kenya/KEN-50/1950) (ASFV).